The following is a 388-amino-acid chain: Oligogalacturonide lyase (388 aa).

The protein resides in the periplasm. The enzyme catalyses 4-(4-deoxy-alpha-D-galact-4-enuronosyl)-D-galacturonate = 2 5-dehydro-4-deoxy-D-glucuronate. The protein operates within glycan metabolism; pectin degradation; 2-dehydro-3-deoxy-D-gluconate from pectin: step 3/5. Involved in degradation of pectin, which causes soft-rod disease in plants. This is Oligogalacturonide lyase (ogl) from Pectobacterium atrosepticum (strain SCRI 1043 / ATCC BAA-672) (Erwinia carotovora subsp. atroseptica).